A 247-amino-acid polypeptide reads, in one-letter code: MGRGKIEVKRIENNTSRQVTFSKRRSGLMKKTHELSVLCDAQIGLIVFSTKGKLTEYCTPPFSMKQIIDRYVKAKGILPEMENRAGPHADNDQVIKELTRMKEETLNLQLNLQRYKGDDLSTVRFEELTELEKLLDQSLNKVRARKLELLHEQMENLKRTEFMLEKENQEMYHWLMSNQIQRQAEVEHHHQQQVMTELKLVEQQQPLMNEFPFFGEDLHLGTLPLLDTHSYRLQPTQPNLQDPAQIN.

The region spanning 1–61 (MGRGKIEVKR…GKLTEYCTPP (61 aa)) is the MADS-box domain. Positions 91-183 (NDQVIKELTR…WLMSNQIQRQ (93 aa)) constitute a K-box domain.

In terms of tissue distribution, expressed exclusively in a few inner cell layers of the inner integuments of the ovules.

The protein resides in the nucleus. Probable transcription factor. This chain is MADS-box protein defh21 (DEFH21), found in Antirrhinum majus (Garden snapdragon).